Here is a 245-residue protein sequence, read N- to C-terminus: Probable histone chaperone asf-1-like protein (245 aa).

Acidic residues predominate over residues 157–166 (EDPVAEPVDE). A disordered region spans residues 157 to 245 (EDPVAEPVDE…SGDVEMGDKH (89 aa)). Positions 167–183 (EANKVFDEDDLMPLHDD) are enriched in basic and acidic residues. Residues 184–206 (GQDDDEEEEDDDETGPNTEEVDL) show a composition bias toward acidic residues. A compositionally biased stretch (basic and acidic residues) spans 215-245 (ANAHDGTEQKNGEESMEHDGASGDVEMGDKH).

Belongs to the ASF1 family. In terms of assembly, interacts with histone H3 and histone H4.

The protein resides in the nucleus. Histone chaperone that facilitates histone deposition and histone exchange and removal during nucleosome assembly and disassembly. This Caenorhabditis elegans protein is Probable histone chaperone asf-1-like protein (asfl-1).